Consider the following 151-residue polypeptide: Cell division protein SepF (151 aa).

A compositionally biased stretch (acidic residues) spans 17–29; it reads DNEDDYQDQEDEQ. The segment at 17-42 is disordered; it reads DNEDDYQDQEDEQAQQPAPEQPVDNH.

The protein belongs to the SepF family. Homodimer. Interacts with FtsZ.

It localises to the cytoplasm. Functionally, cell division protein that is part of the divisome complex and is recruited early to the Z-ring. Probably stimulates Z-ring formation, perhaps through the cross-linking of FtsZ protofilaments. Its function overlaps with FtsA. The sequence is that of Cell division protein SepF from Lacticaseibacillus casei (strain BL23) (Lactobacillus casei).